A 254-amino-acid chain; its full sequence is Probable transcriptional regulatory protein Saro_0419 (254 aa).

Residues 1-14 (MAGHSKFKNIMHRK) show a composition bias toward basic residues. The disordered stretch occupies residues 1-22 (MAGHSKFKNIMHRKGAQDKKRS).

This sequence belongs to the TACO1 family.

Its subcellular location is the cytoplasm. In Novosphingobium aromaticivorans (strain ATCC 700278 / DSM 12444 / CCUG 56034 / CIP 105152 / NBRC 16084 / F199), this protein is Probable transcriptional regulatory protein Saro_0419.